The chain runs to 202 residues: Ribonuclease HII (202 aa).

In terms of domain architecture, RNase H type-2 spans Leu-14–Ala-202. Residues Asp-20, Glu-21, and Asp-111 each coordinate a divalent metal cation.

Belongs to the RNase HII family. The cofactor is Mn(2+). Requires Mg(2+) as cofactor.

It localises to the cytoplasm. The enzyme catalyses Endonucleolytic cleavage to 5'-phosphomonoester.. In terms of biological role, endonuclease that specifically degrades the RNA of RNA-DNA hybrids. The chain is Ribonuclease HII from Rhizorhabdus wittichii (strain DSM 6014 / CCUG 31198 / JCM 15750 / NBRC 105917 / EY 4224 / RW1) (Sphingomonas wittichii).